A 188-amino-acid chain; its full sequence is UPF0461 protein C5orf24 homolog (188 aa).

Ser-37 carries the post-translational modification Phosphoserine. A Glycyl lysine isopeptide (Lys-Gly) (interchain with G-Cter in SUMO2) cross-link involves residue Lys-75. A compositionally biased stretch (basic residues) spans 80–92 (KKKNLNRSGKRGR). The segment at 80–141 (KKKNLNRSGK…AGYKVSPGRP (62 aa)) is disordered. The segment covering 94–107 (SGTTKSAGYRTSTG) has biased composition (polar residues). Phosphoserine occurs at positions 121 and 180. Lys-184 participates in a covalent cross-link: Glycyl lysine isopeptide (Lys-Gly) (interchain with G-Cter in SUMO2).

This sequence belongs to the UPF0461 family.

The polypeptide is UPF0461 protein C5orf24 homolog (Mus musculus (Mouse)).